Consider the following 94-residue polypeptide: Large ribosomal subunit protein uL23 (94 aa).

This sequence belongs to the universal ribosomal protein uL23 family. Part of the 50S ribosomal subunit. Contacts protein L29, and trigger factor when it is bound to the ribosome.

Functionally, one of the early assembly proteins it binds 23S rRNA. One of the proteins that surrounds the polypeptide exit tunnel on the outside of the ribosome. Forms the main docking site for trigger factor binding to the ribosome. This is Large ribosomal subunit protein uL23 from Mycoplasma mycoides subsp. mycoides SC (strain CCUG 32753 / NCTC 10114 / PG1).